Reading from the N-terminus, the 327-residue chain is Phenylalanine--tRNA ligase alpha subunit (327 aa).

Position 252 (Glu252) interacts with Mg(2+).

It belongs to the class-II aminoacyl-tRNA synthetase family. Phe-tRNA synthetase alpha subunit type 1 subfamily. As to quaternary structure, tetramer of two alpha and two beta subunits. Mg(2+) serves as cofactor.

The protein localises to the cytoplasm. The enzyme catalyses tRNA(Phe) + L-phenylalanine + ATP = L-phenylalanyl-tRNA(Phe) + AMP + diphosphate + H(+). The protein is Phenylalanine--tRNA ligase alpha subunit of Klebsiella pneumoniae subsp. pneumoniae (strain ATCC 700721 / MGH 78578).